The chain runs to 1161 residues: BMP-2-inducible protein kinase (1161 aa).

The disordered stretch occupies residues 1–20 (MKKFSRMPKSEGGSGGGAAG). The residue at position 14 (serine 14) is a Phosphoserine. Residues 51-316 (VTLEESLAEG…DIFQVSYFAF (266 aa)) form the Protein kinase domain. ATP contacts are provided by residues 57-65 (LAEGGFSTV) and lysine 79. Aspartate 180 functions as the Proton acceptor in the catalytic mechanism. Disordered stretches follow at residues 358–439 (TDTI…RVLQ), 453–495 (LQHR…HHHL), 610–630 (TNQK…FGED), and 655–832 (ERAS…TQDL). Polar residues predominate over residues 361–394 (IGPTETSIAPRQRPKANSATTATPSVLTIQSSAT). Low complexity-rich tracts occupy residues 422–439 (LLGQ…RVLQ) and 460–485 (QQQQ…QQQQ). Over residues 610 to 619 (TNQKNISNPP) the composition is skewed to polar residues. Serine 689 bears the Phosphoserine mark. Polar residues-rich tracts occupy residues 697 to 718 (SSIN…SPAS) and 726 to 735 (KTSVQGQVQK). Residue serine 742 is modified to Phosphoserine. Acidic residues predominate over residues 755–779 (EEEEQDDEEVLQGEQGDFNDDDTEP). Basic and acidic residues predominate over residues 798–813 (EKHSSDSDYEQAKAKY). Phosphoserine is present on residues serine 817 and serine 818. A Phosphothreonine modification is found at threonine 834. Serine 928 carries the post-translational modification Phosphoserine. Residues 965 to 1035 (SQQQKVKQRS…RRDSQSSNEF (71 aa)) form a disordered region. Residues 970–984 (VKQRSLQKLSSRQRR) are compositionally biased toward basic residues. A compositionally biased stretch (low complexity) spans 1000–1011 (TPTSTKKTLKPT). A phosphoserine mark is found at serine 1029, serine 1031, serine 1032, serine 1039, serine 1041, serine 1076, serine 1107, and serine 1111. A compositionally biased stretch (polar residues) spans 1137 to 1146 (TPHQSQQSQP). The interval 1137-1161 (TPHQSQQSQPVELDPFGAAPFPSKQ) is disordered.

This sequence belongs to the protein kinase superfamily. Ser/Thr protein kinase family. In terms of processing, autophosphorylated.

It is found in the nucleus. It carries out the reaction L-seryl-[protein] + ATP = O-phospho-L-seryl-[protein] + ADP + H(+). The enzyme catalyses L-threonyl-[protein] + ATP = O-phospho-L-threonyl-[protein] + ADP + H(+). Functionally, may be involved in osteoblast differentiation. The polypeptide is BMP-2-inducible protein kinase (BMP2K) (Homo sapiens (Human)).